We begin with the raw amino-acid sequence, 342 residues long: Gibberellin cluster GA4 desaturase (342 aa).

The interval 127–183 is disordered; it reads PELAPPYPMPGKSSSGSKEREAIPANELPTTRAKGFQKGEEEGPVRKPHKDWGPSGA.

It belongs to the asaB hydroxylase/desaturase family.

The protein operates within plant hormone biosynthesis; gibberellin biosynthesis. Its function is as follows. GA4 desaturase; part of the gene cluster that mediates the biosynthesis of gibberellins (GAs), diterpenoids that may provide a selective advantage during infection of the preferred host plant, rice. Gibberellins (GAs) are diterpenoids and are synthesized via the mevalonate pathway. Biosynthesis of the major metabolite GA3 (gibberellic acid) from geranylgeranyl diphosphate (GGPP) requires 13 steps. The GGPP produced by the geranylgeranyl diphosphate synthase GGS2 is converted to ent-kaurene via ent-copalyldiphosphate in a two-step cyclization reaction performed by the bifunctional ent-copalyl diphosphate synthase/ent-kaurene synthase enzyme (CPS/KS). Ent-Kaurene is metabolized to GAs by a series of oxidation reactions catalyzed by cytochrome P450 monooxygenases. Cytochrome P450 monooxygenase P450-4 is an ent-kaurene oxidase that catalyzes the three oxidation steps between ent-kaurene and ent-kaurenoic acid. The highly multifunctional cytochrome P450 monooxygenase P450-1 then catalyzes four steps involving oxidation at two carbon atoms, in the main pathway from ent-kaurenoic acid to GA14 via GA12-aldehyde as well as producing kaurenolides and fujenoic acids as by-products. The cytochrome P450 monooxygenase P450-2 then converts GA14 to GA4 by removal of C-20. GA4 is further converted to GA7 by the GA4 desaturase DES via 1,2-desaturation before cytochrome P450 monooxygenase P450-3, a 13-hydroxylase, hydroxylates GA7 to GA3, the final product of the GA-biosynthetic pathway. The protein is Gibberellin cluster GA4 desaturase of Gibberella fujikuroi (strain CBS 195.34 / IMI 58289 / NRRL A-6831) (Bakanae and foot rot disease fungus).